The chain runs to 615 residues: Zinc metalloproteinase-disintegrin-like (615 aa).

A signal peptide spans 1–20; the sequence is MIQALLVTICLVGFPHQGSS. The propeptide occupies 21–195; it reads IILESGNVKD…KMNFQSANNP (175 aa). A Peptidase M12B domain is found at 204–400; it reads KYIKLAVVVD…DLPQCILNKP (197 aa). 3 cysteine pairs are disulfide-bonded: Cys-315-Cys-395, Cys-355-Cys-379, and Cys-357-Cys-362. Zn(2+) is bound at residue His-340. The active site involves Glu-341. Zn(2+) is bound by residues His-344 and His-350. Residues 408–494 form the Disintegrin domain; it reads PAVCGNNFVE…DCPMDGLQRN (87 aa). Val-410, Asn-413, Phe-415, Glu-417, and Asp-423 together coordinate Ca(2+). 14 disulfide bridges follow: Cys-411/Cys-440, Cys-422/Cys-435, Cys-424/Cys-430, Cys-434/Cys-457, Cys-448/Cys-454, Cys-453/Cys-479, Cys-466/Cys-486, Cys-473/Cys-505, Cys-498/Cys-510, Cys-517/Cys-567, Cys-532/Cys-576, Cys-545/Cys-555, Cys-562/Cys-602, and Cys-596/Cys-608. Positions 472 to 474 match the D/ECD-tripeptide motif; the sequence is DCD.

It belongs to the venom metalloproteinase (M12B) family. P-III subfamily. P-IIIa sub-subfamily. As to quaternary structure, monomer. Zn(2+) serves as cofactor. In terms of tissue distribution, expressed by the venom gland.

The protein localises to the secreted. In terms of biological role, snake venom zinc metalloprotease that may induce platelet aggregation. This chain is Zinc metalloproteinase-disintegrin-like, found in Cerberus rynchops (Dog-faced water snake).